The following is a 476-amino-acid chain: Aspartyl/glutamyl-tRNA(Asn/Gln) amidotransferase subunit B (476 aa).

Belongs to the GatB/GatE family. GatB subfamily. Heterotrimer of A, B and C subunits.

The catalysed reaction is L-glutamyl-tRNA(Gln) + L-glutamine + ATP + H2O = L-glutaminyl-tRNA(Gln) + L-glutamate + ADP + phosphate + H(+). It carries out the reaction L-aspartyl-tRNA(Asn) + L-glutamine + ATP + H2O = L-asparaginyl-tRNA(Asn) + L-glutamate + ADP + phosphate + 2 H(+). Allows the formation of correctly charged Asn-tRNA(Asn) or Gln-tRNA(Gln) through the transamidation of misacylated Asp-tRNA(Asn) or Glu-tRNA(Gln) in organisms which lack either or both of asparaginyl-tRNA or glutaminyl-tRNA synthetases. The reaction takes place in the presence of glutamine and ATP through an activated phospho-Asp-tRNA(Asn) or phospho-Glu-tRNA(Gln). This is Aspartyl/glutamyl-tRNA(Asn/Gln) amidotransferase subunit B from Clostridium botulinum (strain Loch Maree / Type A3).